Reading from the N-terminus, the 873-residue chain is MLTAKEIRESFKQFFASKEHQIVPSAPMVVKGDPTLMFTNAGMNQFKDIILGNVPRKYPRVADSQKCLRVSGKHNDLEEVGHDTYHHTMFEMLGNWSFGDYFKKEAINWAWEYLVEVLKLNPERLYATVFEGSPAEGLDRDNEAAGYWEQYLPKDHILNGNKHDNFWEMGDTGPCGPCSEIHIDLRSDEERAAVSGADMVNKDHPQVIEIWNLVFMQFNRKADGSLEPLPAKVIDTGMGFERLCMALQGKTSNYDTDVFQPIIKVIAGMAGTTYGTDKQQDIAMRVIADHIRTIAFAITDGQLPSNAKAGYVIRRILRRAVRYGYTFLDRKEAFMYKLLPVLIETMGDAYPELIAQKTLIEKVIKEEEESFLRTLETGIRLLDKKMEETKAAGKTVLNGVDAFTLYDTYGFPLDLTELILRENGMEADIEEFNKAMQKQKERARNAAAIETGDWITLKDGECKFVGYDLFECEAEILRYRQIKQKNKVLYQIVLDQTPFYAEMGGQVGDTGWLIADDEKIDVIDTKRENNLPVHLVTKLPKDVTATFTAKINVKKRIQCECNHSATHLLHEALREVLGTHVEQKGSYVSPDSLRFDFSHFQKVTDEEIRKVEILVGEKIRANFPLEEHRNMPIAEAKALGAMALFGEKYGDEVRVVKYGSSVELCGGTHIPATGMIGSLRVIGESSIAAGVRRIEAVTAEGAEQFVYAQQDLIRELRALMNHMPNLAQAMKKSIEENAEMKKQIEDYIREKSMRLKEEIVAKASESNGIKVMQFVGKANADAMKNVAFQIKAETTDSFVFVAGIIDDNKCTLMLMLSDDLVKEGLHAGKIVKEAAKHIQGGGGGQPHFATAGGKNMEGLSIAVGAVKEAVGVQ.

Zn(2+)-binding residues include His563, His567, Cys665, and His669.

Belongs to the class-II aminoacyl-tRNA synthetase family. Zn(2+) is required as a cofactor.

It localises to the cytoplasm. The enzyme catalyses tRNA(Ala) + L-alanine + ATP = L-alanyl-tRNA(Ala) + AMP + diphosphate. Its function is as follows. Catalyzes the attachment of alanine to tRNA(Ala) in a two-step reaction: alanine is first activated by ATP to form Ala-AMP and then transferred to the acceptor end of tRNA(Ala). Also edits incorrectly charged Ser-tRNA(Ala) and Gly-tRNA(Ala) via its editing domain. In Parabacteroides distasonis (strain ATCC 8503 / DSM 20701 / CIP 104284 / JCM 5825 / NCTC 11152), this protein is Alanine--tRNA ligase.